The sequence spans 800 residues: Calmodulin-sensitive adenylate cyclase (800 aa).

The signal sequence occupies residues methionine 1–alanine 33. The region spanning lysine 60–lysine 273 is the ATLF-like domain. Positions aspartate 294–asparagine 349 are catalytic CA1. The segment at valine 350–threonine 489 is catalytic CB. Histidine 351 functions as the Proton acceptor in the catalytic mechanism. A catalytic CA2 region spans residues alanine 490–lysine 622. Mg(2+)-binding residues include aspartate 491 and aspartate 493. 3',5'-cyclic AMP-binding positions include threonine 548 and histidine 577–threonine 579. Residue histidine 577 participates in Mg(2+) binding. Residues aspartate 623–lysine 800 are interaction with calmodulin.

It belongs to the adenylyl cyclase class-2 family. In terms of assembly, interacts (via ATLF domain) with the cleaved form of protective antigen (PA-63) anthrax toxin; interaction is required for EF translocation into the host cytoplasm. Requires Ca(2+) as cofactor.

The protein resides in the secreted. It is found in the host cytoplasm. It localises to the host cytosol. It carries out the reaction ATP = 3',5'-cyclic AMP + diphosphate. With respect to regulation, host calmodulin is an absolute requirement for its activation. Inhibited by ethyl 5-aminopyrazolo[1,5-a]quinazoline-3-carboxylate. Edema factor (EF), which constitutes one of the three proteins composing the anthrax toxin, causes edema in the host. Acts as a calmodulin-dependent adenylyl cyclase by converting ATP to cAMP, leading to dramatic elevation of intracellular cAMP levels in the host, thereby causing edema. EF is not toxic by itself and only acts as an edema factor when associated with protective antigen (PA) to form the edema toxin (EdTx). Required for the survival of germinated spores within macrophages at the early stages of infection. This chain is Calmodulin-sensitive adenylate cyclase (cya), found in Bacillus anthracis.